Reading from the N-terminus, the 359-residue chain is Probable RNA methyltransferase RPD_2859 (359 aa).

Residue Glu99 is the Proton acceptor of the active site. The 226-residue stretch at 105-330 (RFDGHTACIS…PVVVRDTQGR (226 aa)) folds into the Radical SAM core domain. A disulfide bond links Cys112 and Cys336. [4Fe-4S] cluster contacts are provided by Cys119, Cys123, and Cys126. S-adenosyl-L-methionine is bound by residues 162-163 (GE), Ser194, 217-219 (SLH), and Asn293. Cys336 (S-methylcysteine intermediate) is an active-site residue.

This sequence belongs to the radical SAM superfamily. RlmN family. The cofactor is [4Fe-4S] cluster.

It localises to the cytoplasm. This Rhodopseudomonas palustris (strain BisB5) protein is Probable RNA methyltransferase RPD_2859.